The primary structure comprises 262 residues: Hydroxyethylthiazole kinase (262 aa).

Met-44 is a substrate binding site. Positions 118 and 166 each coordinate ATP. Gly-193 contacts substrate.

Belongs to the Thz kinase family. Mg(2+) serves as cofactor.

The enzyme catalyses 5-(2-hydroxyethyl)-4-methylthiazole + ATP = 4-methyl-5-(2-phosphooxyethyl)-thiazole + ADP + H(+). It functions in the pathway cofactor biosynthesis; thiamine diphosphate biosynthesis; 4-methyl-5-(2-phosphoethyl)-thiazole from 5-(2-hydroxyethyl)-4-methylthiazole: step 1/1. In terms of biological role, catalyzes the phosphorylation of the hydroxyl group of 4-methyl-5-beta-hydroxyethylthiazole (THZ). The polypeptide is Hydroxyethylthiazole kinase (Chlamydia felis (strain Fe/C-56) (Chlamydophila felis)).